Here is a 481-residue protein sequence, read N- to C-terminus: MFS transporter eqxG (481 aa).

A compositionally biased stretch (low complexity) spans 1–13; that stretch reads MATTDPAIAAPDD. The interval 1–58 is disordered; it reads MATTDPAIAAPDDSQLEAGRENIRANVGDALEKPSSSTGTMVDEPTDPNVVDWDGPHD. Asn64 carries an N-linked (GlcNAc...) asparagine glycan. A helical transmembrane segment spans residues 72–92; sequence LHLVIVSLFTLAANLAATMFA. An N-linked (GlcNAc...) asparagine glycan is attached at Asn106. A run of 10 helical transmembrane segments spans residues 111-131, 146-166, 169-189, 201-221, 276-296, 315-335, 353-373, 380-400, 403-423, and 439-459; these read AMTV…LAPL, FVYV…MFLV, IICG…VADL, LFTV…TVIF, PIVL…FLLF, GLAY…FSVL, LILM…YGWT, WIVP…VVIP, IYLV…ANLL, and LYVS…CLLF.

The protein belongs to the major facilitator superfamily.

The protein resides in the cell membrane. In terms of biological role, efflux pump that might be required for efficient secretion of equisetin or other secondary metabolies produced by the equisetin gene cluster. The chain is MFS transporter eqxG from Fusarium heterosporum.